Consider the following 309-residue polypeptide: HPr kinase/phosphorylase (309 aa).

Catalysis depends on residues His138 and Lys159. 153–160 (GQSGVGKS) contributes to the ATP binding site. Ser160 is a binding site for Mg(2+). Asp177 (proton acceptor; for phosphorylation activity. Proton donor; for dephosphorylation activity) is an active-site residue. Positions 201–210 (LEIRGLGIIN) are important for the catalytic mechanism of both phosphorylation and dephosphorylation. Glu202 serves as a coordination point for Mg(2+). Arg243 is a catalytic residue. Residues 264 to 269 (PVRPGR) are important for the catalytic mechanism of dephosphorylation.

Belongs to the HPrK/P family. In terms of assembly, homohexamer. Mg(2+) is required as a cofactor.

It catalyses the reaction [HPr protein]-L-serine + ATP = [HPr protein]-O-phospho-L-serine + ADP + H(+). The enzyme catalyses [HPr protein]-O-phospho-L-serine + phosphate + H(+) = [HPr protein]-L-serine + diphosphate. Its function is as follows. Catalyzes the ATP- as well as the pyrophosphate-dependent phosphorylation of a specific serine residue in HPr, a phosphocarrier protein of the phosphoenolpyruvate-dependent sugar phosphotransferase system (PTS). HprK/P also catalyzes the pyrophosphate-producing, inorganic phosphate-dependent dephosphorylation (phosphorolysis) of seryl-phosphorylated HPr (P-Ser-HPr). The two antagonistic activities of HprK/P are regulated by several intracellular metabolites, which change their concentration in response to the absence or presence of rapidly metabolisable carbon sources (glucose, fructose, etc.) in the growth medium. Also phosphorylates/dephosphorylates the HPr-like catabolite repression protein crh on a specific serine residue. Therefore, by controlling the phosphorylation state of HPr and crh, HPrK/P is a sensor enzyme that plays a major role in the regulation of carbon metabolism and sugar transport: it mediates carbon catabolite repression (CCR), and regulates PTS-catalyzed carbohydrate uptake and inducer exclusion. The protein is HPr kinase/phosphorylase of Bacillus cereus (strain B4264).